A 318-amino-acid polypeptide reads, in one-letter code: 2-desacetyl-2-hydroxyethyl bacteriochlorophyllide A dehydrogenase (318 aa).

The protein operates within porphyrin-containing compound metabolism; bacteriochlorophyll biosynthesis (light-independent). Its function is as follows. This protein catalyzes the penultimate step in bacteriochlorophyll a biosynthesis. This Cereibacter sphaeroides (strain ATCC 17023 / DSM 158 / JCM 6121 / CCUG 31486 / LMG 2827 / NBRC 12203 / NCIMB 8253 / ATH 2.4.1.) (Rhodobacter sphaeroides) protein is 2-desacetyl-2-hydroxyethyl bacteriochlorophyllide A dehydrogenase (bchC).